The sequence spans 116 residues: Integration host factor subunit alpha (116 aa).

2 disordered regions span residues 58-80 and 94-116; these read FGNF…GETI and QKLK…EAAE. The span at 94-105 shows a compositional bias: polar residues; it reads QKLKSTVEQSGN.

It belongs to the bacterial histone-like protein family. Heterodimer of an alpha and a beta chain.

Its function is as follows. This protein is one of the two subunits of integration host factor, a specific DNA-binding protein that functions in genetic recombination as well as in transcriptional and translational control. This chain is Integration host factor subunit alpha, found in Bordetella avium (strain 197N).